Here is a 291-residue protein sequence, read N- to C-terminus: 3-hydroxy-5-phosphonooxypentane-2,4-dione thiolase (291 aa).

Lys-203 functions as the Schiff-base intermediate with substrate in the catalytic mechanism.

This sequence belongs to the DeoC/FbaB aldolase family. As to quaternary structure, homodecamer.

The protein resides in the cytoplasm. The catalysed reaction is dihydroxyacetone phosphate + acetyl-CoA = 3-hydroxy-2,4-dioxopentyl phosphate + CoA. Functionally, involved in the degradation of phospho-AI-2, thereby terminating induction of the lsr operon and closing the AI-2 signaling cycle. Catalyzes the transfer of an acetyl moiety from 3-hydroxy-5-phosphonooxypentane-2,4-dione to CoA to form glycerone phosphate and acetyl-CoA. The chain is 3-hydroxy-5-phosphonooxypentane-2,4-dione thiolase from Salmonella paratyphi A (strain ATCC 9150 / SARB42).